The following is a 345-amino-acid chain: Phosphoribosylformylglycinamidine cyclo-ligase (345 aa).

The protein belongs to the AIR synthase family.

The protein localises to the cytoplasm. It carries out the reaction 2-formamido-N(1)-(5-O-phospho-beta-D-ribosyl)acetamidine + ATP = 5-amino-1-(5-phospho-beta-D-ribosyl)imidazole + ADP + phosphate + H(+). It participates in purine metabolism; IMP biosynthesis via de novo pathway; 5-amino-1-(5-phospho-D-ribosyl)imidazole from N(2)-formyl-N(1)-(5-phospho-D-ribosyl)glycinamide: step 2/2. This Histophilus somni (strain 2336) (Haemophilus somnus) protein is Phosphoribosylformylglycinamidine cyclo-ligase.